The primary structure comprises 391 residues: MATVIQNPLKALGDQFYREAIEHCRSYNARLCAERSVRMPFLDSQTGVAQNNCYIWMEKRHRGPGMAAGQMYTYPARCWRKKRRLHTPLDPQLRLCELRLEAELMAKREAPQTEATALEALLRGDGILDKRNNNAKEEETLLEIQRVLEADENGDGFHDDEDFEVDTPKRKHRNKGRGRGSGRRRTEAVANDDQDKPYVCDNRYKQKHNSKTADSVCGKRYKNRPGLSYHYAHTHLAEEEGEEERETEIPQSPPVHHENHKPQKAPDGSIIPNDYCDFCLGDSGSNRKTGQAEELVSCSDCGRSGHPSCLQFTDNMMQAVRTYQWQCIECKSCSLCGTSENDDQLLFCDDCDRGYHMYCLKPPMTQPPEGSWSCHLCQNLLKDKASGVEDP.

Positions 152–165 are enriched in acidic residues; sequence ENGDGFHDDEDFEV. Disordered stretches follow at residues 152-200 and 236-266; these read ENGD…PYVC and LAEE…QKAP. Residues 169–183 are compositionally biased toward basic residues; sequence KRKHRNKGRGRGSGR. Residues 198-235 form a C2H2-type zinc finger; the sequence is YVCDNRYKQKHNSKTADSVCGKRYKNRPGLSYHYAHTH. 2 PHD-type zinc fingers span residues 273–333 and 330–380; these read NDYC…CKSC and CKSC…CQNL.

Component of the BAF complex. Interacts with acetylated histones H3 and H4. Component of neuron-specific chromatin remodeling complex (nBAF complex), a subfamily of ATP-dependent SWI/SNF chromatin remodeling complexes. Expressed in the heart and somites.

It is found in the nucleus. In terms of biological role, muscle-specific component of the BAF complex, a multiprotein complex involved in transcriptional activation and repression of select genes by chromatin remodeling (alteration of DNA-nucleosome topology). Specifically binds acetylated lysines on histone 3 and 4. In the complex, it acts as a tissue-specific anchor between histone acetylations and methylations and chromatin remodeling. Belongs to the neuron-specific chromatin remodeling complex (nBAF complex) and may play a role in neural development. Plays an essential role in heart and skeletal muscle development. The chain is Zinc finger protein DPF3 (dpf3) from Danio rerio (Zebrafish).